Consider the following 707-residue polypeptide: F-box/WD repeat-containing protein 7 (707 aa).

The interval 1–151 is disordered; the sequence is MNQELLSVGS…SVTNSSSIVD (151 aa). Residue serine 26 is modified to Phosphoserine; by ATM. Over residues 57–68 the composition is skewed to low complexity; that stretch reads GEVVGVEPRPGG. Over residues 69 to 84 the composition is skewed to polar residues; sequence QNDSQQGQLEENNNRF. Over residues 87–129 the composition is skewed to acidic residues; the sequence is VDEDSSGNQEEQEEDEEHAGEQDEEDEEEEEMDQESDDFDQSD. The segment covering 130 to 139 has biased composition (basic and acidic residues); the sequence is DSSREDEHTH. Threonine 205 is modified (phosphothreonine). Serine 227 bears the Phosphoserine; by SGK1 mark. The F-box domain occupies 278–324; that stretch reads RDFISLLPKELALYVLSFLEPKDLLQAAQTCRYWRILAEDNLLWREK. WD repeat units follow at residues 378–418, 420–456, 459–498, 500–536, 539–578, 580–618, and 622–659; these read GHDD…RTLV, HTGGVWSSQMRDNIIISGSTDRTLKVWNAETGECIHT, GHTSTVRCMHLHEKRVVSGSRDATLRVWDIETGQCLHVLM, HVAAVRCVQYDGRRVVSGAYDFMVKVWDPETETCLHT, GHTNRVYSLQFDGIHVVSGSLDTSIRVWDVETGNCIHTLT, HQSLTSGMELKDNILVSGNADSTVKIWDIKTGQCLQTLQ, and KHQSAVTCLQFNKNFVITSSDDGTVKLWDLKTGEFIRN.

In terms of assembly, homodimer; homodimerization plays a role in substrate binding and/or ubiquitination and degradation. Component of the SCF(FBXW7) complex consisting of CUL1, RBX1, SKP1 and FBXW7. Interacts (via F-box domain) with SKP1. Interacts (via F-box domain) with pseudophosphatase STYX; the interaction is direct and prevents FBXW7 interaction with SKP1. Interacts with cyclin-E (CCNE1 or CCNE2). Interacts with PSEN1. Forms a trimeric complex with NOTCH1 and SGK1. Interacts with NOTCH1 intracellular domain/NICD and NOTCH4 intracellular domain/NICD. Interacts with NOTCH2 intracellular domain (N2ICD). Interacts with MYC (when phosphorylated). Interacts with USP28, counteracting ubiquitination of MYC. Interacts with JUN. Found in a complex with JUN and PRR7. Interacts with JUN and PRR7; the interaction inhibits ubiquitination-mediated JUN degradation, promoting its phosphorylation and transcriptional activity. Interacts (when phosphorylated at Thr-205) with PIN1, disrupting FBXW7 dimerization and promoting FBXW7 autoubiquitination and degradation. Interacts with UBE2QL1. Interacts with FAM83D; promotes FBXW7 degradation. Interacts with MYCN; FBXW7 competes with AURKA for binding to unphosphorylated MYCN but not for binding to phosphorylated MYCN. Interacts with STOML1. Interacts with NFE2L1. Interacts with USP36, counteracting ubiquitination of MYC. Interacts with NR1D1. Interacts with RICTOR; mediates RICTOR ubiquitination and degradation. Interacts with USP38, counteracting ubiquitination of MYC. (Microbial infection) Interacts (via WD repeats) with SV40 large T antigen (via CPD region). In terms of processing, phosphorylation at Thr-205 promotes interaction with PIN1, leading to disrupt FBXW7 dimerization and promoting FBXW7 autoubiquitination and degradation. Phosphorylated by ATM at Ser-26 in response to DNA damage, promoting recruitment to DNA damage sites and 'Lys-63'-linked ubiquitination of phosphorylated XRCC4. Post-translationally, ubiquitinated: autoubiquitinates following phosphorylation at Thr-205 and subsequent interaction with PIN1. Ubiquitination leads to its proteasomal degradation. In terms of tissue distribution, widely expressed. As to expression, expressed in brain.

The protein localises to the nucleus. It localises to the nucleoplasm. The protein resides in the chromosome. It is found in the cytoplasm. Its subcellular location is the nucleolus. Its pathway is protein modification; protein ubiquitination. Functionally, substrate recognition component of a SCF (SKP1-CUL1-F-box protein) E3 ubiquitin-protein ligase complex which mediates the ubiquitination and subsequent proteasomal degradation of target proteins. Recognizes and binds phosphorylated sites/phosphodegrons within target proteins and thereafter brings them to the SCF complex for ubiquitination. Identified substrates include cyclin-E (CCNE1 or CCNE2), DISC1, JUN, MYC, NOTCH1 released notch intracellular domain (NICD), NFE2L1, NOTCH2, MCL1, MLST8, RICTOR, and probably PSEN1. Acts as a negative regulator of JNK signaling by binding to phosphorylated JUN and promoting its ubiquitination and subsequent degradation. Involved in bone homeostasis and negative regulation of osteoclast differentiation. Regulates the amplitude of the cyclic expression of hepatic core clock genes and genes involved in lipid and glucose metabolism via ubiquitination and proteasomal degradation of their transcriptional repressor NR1D1; CDK1-dependent phosphorylation of NR1D1 is necessary for SCF(FBXW7)-mediated ubiquitination. Also able to promote 'Lys-63'-linked ubiquitination in response to DNA damage. The SCF(FBXW7) complex facilitates double-strand break repair following phosphorylation by ATM: phosphorylation promotes localization to sites of double-strand breaks and 'Lys-63'-linked ubiquitination of phosphorylated XRCC4, enhancing DNA non-homologous end joining. The chain is F-box/WD repeat-containing protein 7 from Homo sapiens (Human).